A 643-amino-acid chain; its full sequence is Uromodulin (643 aa).

The first 26 residues, 1–26 (MKCLFSPNFMWMAAVVTSWVIIPAAT), serve as a signal peptide directing secretion. Residues 32–66 (KSCSECHSNATCTVDGAATTCACQEGFTGDGLECV) enclose the EGF-like 1 domain. Cystine bridges form between cysteine 34–cysteine 43, cysteine 37–cysteine 52, cysteine 54–cysteine 65, cysteine 71–cysteine 85, cysteine 79–cysteine 94, cysteine 96–cysteine 108, cysteine 114–cysteine 128, cysteine 122–cysteine 137, cysteine 139–cysteine 150, cysteine 152–cysteine 163, cysteine 157–cysteine 172, cysteine 176–cysteine 269, cysteine 197–cysteine 284, cysteine 219–cysteine 257, cysteine 225–cysteine 289, cysteine 250–cysteine 258, cysteine 299–cysteine 308, cysteine 302–cysteine 317, cysteine 319–cysteine 349, cysteine 337–cysteine 427, and cysteine 368–cysteine 391. N-linked (GlcNAc...) asparagine glycosylation is present at asparagine 40. The region spanning 67 to 109 (DLDECAVLGAHNCSATKSCVNTLGSYTCVCPEGFLLSSELGCE) is the EGF-like 2; calcium-binding domain. A glycan (N-linked (GlcNAc...) asparagine) is linked at asparagine 78. An EGF-like 3; calcium-binding domain is found at 110–151 (DVDECAEPGLSRCHALATCINGEGNYSCVCPAGYLGDGRHCE). N-linked (GlcNAc...) asparagine glycosylation occurs at asparagine 134. The segment at 152–173 (CSPGSCGPGLDCVREGDALVCV) is beta hairpin. Residues 174 to 293 (DPCQVHRILD…CHLAYCTDPS (120 aa)) are D10C. N-linked (GlcNAc...) asparagine glycosylation is present at asparagine 234. Asparagine 277 carries an N-linked (GlcNAc...) asparagine glycan. An EGF-like 4 domain is found at 294–325 (SVEGTCEECRVDEDCKSDNGEWHCQCKQDFNV). N-linked (GlcNAc...) asparagine glycosylation is present at asparagine 324. Residues 336 to 431 (ECGVDDIKLS…RINFACSYPL (96 aa)) form a ZP-N region. The ZP domain occupies 336–587 (ECGVDDIKLS…EKCRPTCPET (252 aa)). N-linked (GlcNAc...) asparagine glycosylation is found at asparagine 398 and asparagine 449. Residues 432-455 (DMKVSLKTSLQPMVSALNISMGGT) form a flexible ZP-N/ZP-C linker; important for secretion and polymerization into filaments region. The segment at 456-466 (GTFTVRMALFQ) is internal hydrophobic patch (IHP). The interval 456–587 (GTFTVRMALF…EKCRPTCPET (132 aa)) is ZP-C. 3 disulfide bridges follow: cysteine 508/cysteine 568, cysteine 529/cysteine 584, and cysteine 573/cysteine 580. Asparagine 515 is a glycosylation site (N-linked (GlcNAc...) asparagine). The tract at residues 588-591 (RFRS) is essential for cleavage by HPN. The external hydrophobic patch (EHP); regulates polymerization into filaments stretch occupies residues 600 to 608 (VLNLGPITR). Serine 621 is lipidated: GPI-anchor amidated serine. The propeptide at 622-643 (SLGLLQVWLPLLLSATLTLMSP) is removed in mature form.

As to quaternary structure, homodimer that then polymerizes into long filaments. The filaments can additionally assemble laterally to form a sheet. The filaments consist of a zigzag-shaped backbone with laterally protruding arms which interact with bacterial adhesin fimH. Two fimH molecules can bind to a single UMOD monomer. N-glycosylated. Post-translationally, proteolytically cleaved at a conserved C-terminal proteolytic cleavage site to generate the secreted form found in urine. This cleavage is catalyzed by HPN.

It is found in the apical cell membrane. It localises to the basolateral cell membrane. The protein resides in the cell projection. The protein localises to the cilium membrane. Its subcellular location is the secreted. Functionally, functions in biogenesis and organization of the apical membrane of epithelial cells of the thick ascending limb of Henle's loop (TALH), where it promotes formation of complex filamentous gel-like structure that may play a role in the water barrier permeability. May serve as a receptor for binding and endocytosis of cytokines (IL-1, IL-2) and TNF. Facilitates neutrophil migration across renal epithelia. In terms of biological role, in the urine, may contribute to colloid osmotic pressure, retards passage of positively charged electrolytes, and inhibits formation of liquid containing supersaturated salts and subsequent formation of salt crystals. Protects against urinary tract infections by binding to type 1 fimbriated E.coli. Binds to bacterial adhesin fimH which mediates the stable formation of bacterial aggregates, prevents the binding of E.coli to uroplakins UPK1A and UPK1B which act as urothelial receptors for type I fimbriae, and allows for pathogen clearance through micturation. Also promotes aggregation of other bacteria including K.pneumoniae, P.aeruginosa and S.mitis and so may also protect against other uropathogens. The protein is Uromodulin (UMOD) of Bos taurus (Bovine).